The sequence spans 1070 residues: Granule associated Rac and RHOG effector protein 1 (1070 aa).

Disordered regions lie at residues glutamate 681–glycine 771, serine 855–proline 992, and serine 1032–tyrosine 1070. Positions proline 692 to alanine 702 are enriched in pro residues. 3 stretches are compositionally biased toward low complexity: residues proline 719–glycine 742, alanine 906–serine 924, and threonine 951–threonine 962. Phosphoserine is present on serine 723. Pro residues predominate over residues proline 977 to proline 992. Over residues histidine 1046–glycine 1058 the composition is skewed to low complexity.

In terms of assembly, interacts with AGO2 and TNRC6A.

It is found in the cytoplasm. The protein resides in the P-body. Acts as an effector of RAC1. Associates with CCR4-NOT complex which is one of the major cellular mRNA deadenylases and is linked to various cellular processes including bulk mRNA degradation, miRNA-mediated repression, translational repression during translational initiation and general transcription regulation. May also play a role in miRNA silencing machinery. In Homo sapiens (Human), this protein is Granule associated Rac and RHOG effector protein 1.